A 414-amino-acid polypeptide reads, in one-letter code: Putative gustatory receptor 47b (414 aa).

Residues 1 to 5 (MQRDD) are Cytoplasmic-facing. A helical membrane pass occupies residues 6–26 (GFVYCYGNLYSLLLYWGLVTI). Topologically, residues 27-40 (RVRSPDRGGAFSNR) are extracellular. A helical membrane pass occupies residues 41 to 61 (WTVCYALFTRSFMVICFMATV). At 62–142 (MTKLRDPEMS…QWNYRRARLK (81 aa)) the chain is on the cytoplasmic side. A helical membrane pass occupies residues 143-163 (YWYGTVIVGFCFFSFSISLIF). The Extracellular segment spans residues 164–182 (DTTRCTCGIPSTLLMAFTY). The helical transmembrane segment at 183 to 203 (TLLTSSVGLLGFVHIGIMDFI) threads the bilayer. The Cytoplasmic portion of the chain corresponds to 204-249 (RVRLRLVQQLLHQLYQADDSSEVHERIAYLFEMSKRCSFLLAELNG). The helical transmembrane segment at 250 to 270 (VFGFAAAAGIFYDFTIMTCFV) threads the bilayer. At 271–291 (YVICQKLLEREPWDPEYVYML) the chain is on the extracellular side. The helical transmembrane segment at 292 to 312 (LHVAIHTYKVVITSTYGYLLL) threads the bilayer. Topologically, residues 313-364 (REKRNCMHLLSQYSRYFSGQDVARRKTEDFQHWRMHNRQAAMVGSTTLLSVS) are cytoplasmic. A helical membrane pass occupies residues 365–385 (TIYLVYNGMANYVIILVQLLF). Residues 386–414 (QQQQIKDHQLTSGKDVDIVGPMGPITHMD) are Extracellular-facing.

This sequence belongs to the insect chemoreceptor superfamily. Gustatory receptor (GR) family. Gr57a subfamily. As to expression, expressed in neurons of the terminal external chemosensory organ of larvae.

Its subcellular location is the cell membrane. Probable gustatory receptor which mediates acceptance or avoidance behavior, depending on its substrates. The polypeptide is Putative gustatory receptor 47b (Gr47b) (Drosophila melanogaster (Fruit fly)).